Here is a 343-residue protein sequence, read N- to C-terminus: Dihydroorotate dehydrogenase (quinone) (343 aa).

FMN contacts are provided by residues 61-65 (AGLDK) and T85. K65 contacts substrate. A substrate-binding site is contributed by 110–114 (NRMGF). The FMN site is built by N138 and N171. A substrate-binding site is contributed by N171. The active-site Nucleophile is S174. Residue N176 participates in substrate binding. Residues K216 and T244 each coordinate FMN. 245 to 246 (NT) lines the substrate pocket. Residues G267, G296, and 317-318 (YS) contribute to the FMN site.

Belongs to the dihydroorotate dehydrogenase family. Type 2 subfamily. Monomer. It depends on FMN as a cofactor.

It localises to the cell membrane. It catalyses the reaction (S)-dihydroorotate + a quinone = orotate + a quinol. It participates in pyrimidine metabolism; UMP biosynthesis via de novo pathway; orotate from (S)-dihydroorotate (quinone route): step 1/1. Catalyzes the conversion of dihydroorotate to orotate with quinone as electron acceptor. The sequence is that of Dihydroorotate dehydrogenase (quinone) from Pseudomonas savastanoi pv. phaseolicola (strain 1448A / Race 6) (Pseudomonas syringae pv. phaseolicola (strain 1448A / Race 6)).